The following is a 415-amino-acid chain: tRNA(Met) cytidine acetate ligase (415 aa).

ATP-binding positions include valine 7 to histidine 20, glycine 101, asparagine 162, and arginine 187 to isoleucine 188.

The protein belongs to the TmcAL family.

Its subcellular location is the cytoplasm. The enzyme catalyses cytidine(34) in elongator tRNA(Met) + acetate + ATP = N(4)-acetylcytidine(34) in elongator tRNA(Met) + AMP + diphosphate. Its function is as follows. Catalyzes the formation of N(4)-acetylcytidine (ac(4)C) at the wobble position of elongator tRNA(Met), using acetate and ATP as substrates. First activates an acetate ion to form acetyladenylate (Ac-AMP) and then transfers the acetyl group to tRNA to form ac(4)C34. The chain is tRNA(Met) cytidine acetate ligase from Bacillus velezensis (strain DSM 23117 / BGSC 10A6 / LMG 26770 / FZB42) (Bacillus amyloliquefaciens subsp. plantarum).